The chain runs to 480 residues: 6-phosphogluconate dehydrogenase, decarboxylating 1 (480 aa).

Residues 10-15 (GLAVMG), 33-35 (NRT), 77-79 (VKA), and asparagine 105 contribute to the NADP(+) site. Substrate contacts are provided by residues asparagine 105 and 131 to 133 (SGG). Residue lysine 186 is the Proton acceptor of the active site. 189–190 (HN) is a substrate binding site. The active-site Proton donor is glutamate 193. Tyrosine 194, lysine 264, arginine 291, arginine 450, and histidine 456 together coordinate substrate.

It belongs to the 6-phosphogluconate dehydrogenase family. Homodimer. As to expression, highly expressed in inflorescence, lowly expressed in root and embryos and almost absent in leaves.

It is found in the cytoplasm. It catalyses the reaction 6-phospho-D-gluconate + NADP(+) = D-ribulose 5-phosphate + CO2 + NADPH. It functions in the pathway carbohydrate degradation; pentose phosphate pathway; D-ribulose 5-phosphate from D-glucose 6-phosphate (oxidative stage): step 3/3. In terms of biological role, catalyzes the oxidative decarboxylation of 6-phosphogluconate to ribulose 5-phosphate and CO(2), with concomitant reduction of NADP to NADPH. This is 6-phosphogluconate dehydrogenase, decarboxylating 1 (G6PGH1) from Oryza sativa subsp. japonica (Rice).